We begin with the raw amino-acid sequence, 40 residues long: Dolichyl-diphosphooligosaccharide--protein glycosyltransferase subunit 4 (40 aa).

At 1-4 (MITD) the chain is on the lumenal side. The helical transmembrane segment at 5–25 (VQLAIFSNVLGVFLFLLVVAY) threads the bilayer. Over 26–40 (HYINANTGKPSAKAK) the chain is Cytoplasmic.

Belongs to the OST4 family. As to quaternary structure, component of the oligosaccharyltransferase (OST) complex.

It localises to the endoplasmic reticulum membrane. Its function is as follows. Subunit of the oligosaccharyl transferase (OST) complex that catalyzes the initial transfer of a defined glycan (Glc(3)Man(9)GlcNAc(2) in eukaryotes) from the lipid carrier dolichol-pyrophosphate to an asparagine residue within an Asn-X-Ser/Thr consensus motif in nascent polypeptide chains, the first step in protein N-glycosylation. N-glycosylation occurs cotranslationally and the complex associates with the Sec61 complex at the channel-forming translocon complex that mediates protein translocation across the endoplasmic reticulum (ER). All subunits are required for a maximal enzyme activity. In Drosophila erecta (Fruit fly), this protein is Dolichyl-diphosphooligosaccharide--protein glycosyltransferase subunit 4.